The following is a 313-amino-acid chain: Putative S-adenosyl-L-methionine-dependent methyltransferase MAP_3563 (313 aa).

Residues Asp-139 and 168–169 (DL) contribute to the S-adenosyl-L-methionine site.

The protein belongs to the UPF0677 family.

In terms of biological role, exhibits S-adenosyl-L-methionine-dependent methyltransferase activity. This is Putative S-adenosyl-L-methionine-dependent methyltransferase MAP_3563 from Mycolicibacterium paratuberculosis (strain ATCC BAA-968 / K-10) (Mycobacterium paratuberculosis).